Here is a 1258-residue protein sequence, read N- to C-terminus: Regulator of G-protein signaling 22 (1258 aa).

The segment at glutamine 581–lysine 604 is disordered. RGS domains are found at residues threonine 845–glutamine 973 and alanine 1014–lysine 1138. A disordered region spans residues arginine 1145–alanine 1172. The segment covering lysine 1154–glycine 1164 has biased composition (basic and acidic residues).

In terms of assembly, interacts with GNA11, GNA12 and GNA13. Expressed testis, including in Leydig cells and spermatogenic cells from the spermatogonia to spermatid stages (at protein level).

The protein resides in the cytoplasm. Its subcellular location is the nucleus. Functionally, inhibits signal transduction by increasing the GTPase activity of G protein alpha subunits thereby driving them into their inactive GDP-bound form. This Mus musculus (Mouse) protein is Regulator of G-protein signaling 22 (Rgs22).